The sequence spans 549 residues: GATA-type transcription factor sreA (549 aa).

The disordered stretch occupies residues 40 to 100 (AQAGREHPQD…TSPKSQKDTS (61 aa)). Basic and acidic residues-rich tracts occupy residues 43–72 (GREH…HEGE) and 86–97 (HHVEKTSPKSQK). The segment at 106–130 (CSNCGTKSTPLWRRSPTGAMICNAC) adopts a GATA-type 1 zinc-finger fold. The segment at 141–174 (RPTKRNRTQASPEAYHPQNQSVGSQPDPAVTGSE) is disordered. Residues 180–198 (CPGGGNCNGTGGAEGCDGC) form a cystein-rich region (CRR) region. The tract at residues 223-244 (GNSDAVPSPEAEAPARNSGQPE) is disordered. The segment at 251–275 (CQNCGTTVTPLWRRDENGHPICNAC) adopts a GATA-type 2 zinc-finger fold. Disordered stretches follow at residues 306–332 (RENS…PATL), 375–459 (NSGA…RLSS), and 482–535 (LGRQ…MREQ). The span at 309-331 (SPTAATHSSHGSSASPEASSPAT) shows a compositional bias: low complexity. Residues 383-396 (HHPPPPRLLEPGHP) are compositionally biased toward pro residues. Residues 485–497 (QQQSQPHHPQSSP) are compositionally biased toward low complexity. Polar residues predominate over residues 498–515 (LAPTQAASQSLPGVSNMD). Residues 511–549 (VSNMDNHVEDRRAKLQREAEEMREQLRAKERELAELAGQ) are a coiled coil. The span at 516-535 (NHVEDRRAKLQREAEEMREQ) shows a compositional bias: basic and acidic residues.

It localises to the nucleus. Functionally, GATA-type transcription repressor that regulates iron- acquisition genes through specific binding GATA sequence elements of target promoters. Iron acquisition regulation is critical for survival under both iron-limiting conditions (to acquire essential iron) and iron-replete conditions (to limit iron toxicity). SreA targets include genes encoding a number of key iron-regulated factors such as those involved in siderophore biosynthesis. The protein is GATA-type transcription factor sreA of Emericella nidulans (strain FGSC A4 / ATCC 38163 / CBS 112.46 / NRRL 194 / M139) (Aspergillus nidulans).